We begin with the raw amino-acid sequence, 204 residues long: UPF0215 protein MTH_1316 (204 aa).

It belongs to the UPF0215 family.

In Methanothermobacter thermautotrophicus (strain ATCC 29096 / DSM 1053 / JCM 10044 / NBRC 100330 / Delta H) (Methanobacterium thermoautotrophicum), this protein is UPF0215 protein MTH_1316.